The following is a 302-amino-acid chain: Geranylgeranyl diphosphate synthase (302 aa).

The isopentenyl diphosphate site is built by Lys-53, Arg-56, and His-87. Mg(2+) contacts are provided by Asp-94 and Asp-100. Position 105 (Arg-105) interacts with (2E,6E)-farnesyl diphosphate. Arg-106 is an isopentenyl diphosphate binding site. 3 residues coordinate (2E,6E)-farnesyl diphosphate: Lys-189, Thr-190, and Gln-227.

It belongs to the FPP/GGPP synthase family. The cofactor is Mg(2+).

The enzyme catalyses isopentenyl diphosphate + (2E,6E)-farnesyl diphosphate = (2E,6E,10E)-geranylgeranyl diphosphate + diphosphate. It functions in the pathway isoprenoid biosynthesis; geranylgeranyl diphosphate biosynthesis; geranylgeranyl diphosphate from farnesyl diphosphate and isopentenyl diphosphate: step 1/1. Catalyzes the condensation of farnesyl diphosphate (FPP) and isopentenyl diphosphate (IPP) to yield geranylgeranyl diphosphate (GGPP) needed for biosynthesis of carotenoids and diterpenes. This chain is Geranylgeranyl diphosphate synthase (crtE), found in Pantoea ananas (Erwinia uredovora).